Here is a 298-residue protein sequence, read N- to C-terminus: MKPIFRRVAVIGKYPGPGAVSASDSARQIIESIAQFVTQQDCELTLEAETAAHTGLTQYHTLDVEGIGRQCDLCLVVGGDGTMLGVGRRLAGYGTPLVGINQGRLGFITDIPLEGYQDALTPILHGDYEEDVRPLMQACVMRSGECVFEALALNDVVVNRGSTSGMVELRVEVDGVFVSNQRADGLIVASPTGSTAYALSAGGPMLHPSIPGWVLVPIAPHTLSNRPIVLSDATEVAIEVAGGRDISANFDMQSLASLQHGDRILVRRSAHRVCFLHPRGWSYFATLRKKLGWYEGGS.

The active-site Proton acceptor is the Asp-80. NAD(+) is bound by residues 80–81 (DG), 154–155 (ND), Arg-182, Asp-184, 195–200 (TAYALS), Ala-219, and Gln-253.

It belongs to the NAD kinase family. A divalent metal cation is required as a cofactor.

Its subcellular location is the cytoplasm. The enzyme catalyses NAD(+) + ATP = ADP + NADP(+) + H(+). Involved in the regulation of the intracellular balance of NAD and NADP, and is a key enzyme in the biosynthesis of NADP. Catalyzes specifically the phosphorylation on 2'-hydroxyl of the adenosine moiety of NAD to yield NADP. The chain is NAD kinase from Acidovorax sp. (strain JS42).